The sequence spans 518 residues: Anthranilate synthase component 1 (518 aa).

L-tryptophan contacts are provided by residues Ser41 and Pro291–Met293. Residue Gly328–Ser329 coordinates chorismate. Glu361 contacts Mg(2+). Chorismate is bound by residues Tyr449, Arg469, Gly483–Gly485, and Gly485. Glu498 lines the Mg(2+) pocket.

The protein belongs to the anthranilate synthase component I family. In terms of assembly, heterotetramer consisting of two non-identical subunits: a beta subunit (TrpG) and a large alpha subunit (TrpE). Mg(2+) serves as cofactor.

It carries out the reaction chorismate + L-glutamine = anthranilate + pyruvate + L-glutamate + H(+). Its pathway is amino-acid biosynthesis; L-tryptophan biosynthesis; L-tryptophan from chorismate: step 1/5. With respect to regulation, feedback inhibited by tryptophan. Its function is as follows. Part of a heterotetrameric complex that catalyzes the two-step biosynthesis of anthranilate, an intermediate in the biosynthesis of L-tryptophan. In the first step, the glutamine-binding beta subunit (TrpG) of anthranilate synthase (AS) provides the glutamine amidotransferase activity which generates ammonia as a substrate that, along with chorismate, is used in the second step, catalyzed by the large alpha subunit of AS (TrpE) to produce anthranilate. In the absence of TrpG, TrpE can synthesize anthranilate directly from chorismate and high concentrations of ammonia. In Haemophilus influenzae (strain ATCC 51907 / DSM 11121 / KW20 / Rd), this protein is Anthranilate synthase component 1 (trpE).